We begin with the raw amino-acid sequence, 704 residues long: Glycine--tRNA ligase beta subunit (704 aa).

It belongs to the class-II aminoacyl-tRNA synthetase family. In terms of assembly, tetramer of two alpha and two beta subunits.

The protein resides in the cytoplasm. It carries out the reaction tRNA(Gly) + glycine + ATP = glycyl-tRNA(Gly) + AMP + diphosphate. This Rhizobium etli (strain CIAT 652) protein is Glycine--tRNA ligase beta subunit.